The primary structure comprises 319 residues: Transcription factor bHLH111 (319 aa).

Residues 1–23 (MDHHHHIASRNSSTTSELPSFEP) form a disordered region. The span at 9–18 (SRNSSTTSEL) shows a compositional bias: polar residues. The 50-residue stretch at 195–244 (SEGSTLSPEKELPKAKLRDKITTLQQIVSPFGKTDTASVLQEAITYINFY) folds into the bHLH domain.

In terms of assembly, homodimer.

It is found in the nucleus. The polypeptide is Transcription factor bHLH111 (BHLH111) (Arabidopsis thaliana (Mouse-ear cress)).